We begin with the raw amino-acid sequence, 294 residues long: 4-hydroxy-tetrahydrodipicolinate synthase (294 aa).

Residue Thr-44 coordinates pyruvate. The active-site Proton donor/acceptor is Tyr-132. Lys-160 (schiff-base intermediate with substrate) is an active-site residue. Ile-205 contributes to the pyruvate binding site.

Belongs to the DapA family. Homotetramer; dimer of dimers.

The protein resides in the cytoplasm. It carries out the reaction L-aspartate 4-semialdehyde + pyruvate = (2S,4S)-4-hydroxy-2,3,4,5-tetrahydrodipicolinate + H2O + H(+). The protein operates within amino-acid biosynthesis; L-lysine biosynthesis via DAP pathway; (S)-tetrahydrodipicolinate from L-aspartate: step 3/4. In terms of biological role, catalyzes the condensation of (S)-aspartate-beta-semialdehyde [(S)-ASA] and pyruvate to 4-hydroxy-tetrahydrodipicolinate (HTPA). This chain is 4-hydroxy-tetrahydrodipicolinate synthase, found in Kosmotoga olearia (strain ATCC BAA-1733 / DSM 21960 / TBF 19.5.1).